The following is a 116-amino-acid chain: Ribosome-binding factor A (116 aa).

This sequence belongs to the RbfA family. As to quaternary structure, monomer. Binds 30S ribosomal subunits, but not 50S ribosomal subunits or 70S ribosomes.

It is found in the cytoplasm. In terms of biological role, one of several proteins that assist in the late maturation steps of the functional core of the 30S ribosomal subunit. Associates with free 30S ribosomal subunits (but not with 30S subunits that are part of 70S ribosomes or polysomes). Required for efficient processing of 16S rRNA. May interact with the 5'-terminal helix region of 16S rRNA. This Halalkalibacterium halodurans (strain ATCC BAA-125 / DSM 18197 / FERM 7344 / JCM 9153 / C-125) (Bacillus halodurans) protein is Ribosome-binding factor A.